We begin with the raw amino-acid sequence, 146 residues long: Anti-sigma F factor (146 aa).

The protein belongs to the anti-sigma-factor family.

The catalysed reaction is L-seryl-[protein] + ATP = O-phospho-L-seryl-[protein] + ADP + H(+). It catalyses the reaction L-threonyl-[protein] + ATP = O-phospho-L-threonyl-[protein] + ADP + H(+). Its function is as follows. Binds to sigma F and blocks its ability to form an RNA polymerase holoenzyme (E-sigma F). Phosphorylates SpoIIAA on a serine residue. This phosphorylation may enable SpoIIAA to act as an anti-anti-sigma factor that counteracts SpoIIAB and thus releases sigma F from inhibition. This is Anti-sigma F factor from Bacillus cereus (strain G9842).